The following is a 242-amino-acid chain: Derlin-1 (242 aa).

The Cytoplasmic portion of the chain corresponds to 1–20; that stretch reads MSSPAEYYNSLPPISKAYGT. Residues 21–41 form a helical membrane-spanning segment; it reads LCFFATVLCQLQILNPPFLAL. At 42–55 the chain is on the lumenal side; that stretch reads YYPFVFKKFQIWRL. The helical transmembrane segment at 56-76 threads the bilayer; it reads FTSFFFLGKFSINFGIRLLMI. The Cytoplasmic portion of the chain corresponds to 77-94; sequence ARYGVQLEKGAFEKRTAD. The helical transmembrane segment at 95-115 threads the bilayer; sequence FLWMMIFGAISLLALSAIPFL. The Lumenal portion of the chain corresponds to 116–157; the sequence is DIYFLGVPMVSMLLYVWSREYPNSQISMYGLVQLRSFYLPWA. A helical membrane pass occupies residues 158–178; the sequence is MLGLDVIFGSEILPGLLGILV. At 179 to 242 the chain is on the cytoplasmic side; sequence GHTYYFLSVL…FRGRSYRLSQ (64 aa).

It belongs to the derlin family. As to expression, seedling shoots and roots.

The protein localises to the endoplasmic reticulum membrane. Functionally, may be involved in the degradation process of specific misfolded endoplasmic reticulum (ER) luminal proteins. The protein is Derlin-1 (DER1) of Oryza sativa subsp. japonica (Rice).